We begin with the raw amino-acid sequence, 469 residues long: UDP-N-acetylmuramoylalanine--D-glutamate ligase (469 aa).

An ATP-binding site is contributed by 125-131 (GTNGKTT).

This sequence belongs to the MurCDEF family.

The protein resides in the cytoplasm. The catalysed reaction is UDP-N-acetyl-alpha-D-muramoyl-L-alanine + D-glutamate + ATP = UDP-N-acetyl-alpha-D-muramoyl-L-alanyl-D-glutamate + ADP + phosphate + H(+). Its pathway is cell wall biogenesis; peptidoglycan biosynthesis. Functionally, cell wall formation. Catalyzes the addition of glutamate to the nucleotide precursor UDP-N-acetylmuramoyl-L-alanine (UMA). The protein is UDP-N-acetylmuramoylalanine--D-glutamate ligase of Prochlorococcus marinus (strain NATL2A).